A 163-amino-acid polypeptide reads, in one-letter code: uncharacterized protein (163 aa).

This is an uncharacterized protein from Schizosaccharomyces pombe (strain 972 / ATCC 24843) (Fission yeast).